Consider the following 339-residue polypeptide: Nicotinate-nucleotide--dimethylbenzimidazole phosphoribosyltransferase (339 aa).

Catalysis depends on Glu306, which acts as the Proton acceptor.

This sequence belongs to the CobT family.

It catalyses the reaction 5,6-dimethylbenzimidazole + nicotinate beta-D-ribonucleotide = alpha-ribazole 5'-phosphate + nicotinate + H(+). It participates in nucleoside biosynthesis; alpha-ribazole biosynthesis; alpha-ribazole from 5,6-dimethylbenzimidazole: step 1/2. Its function is as follows. Catalyzes the synthesis of alpha-ribazole-5'-phosphate from nicotinate mononucleotide (NAMN) and 5,6-dimethylbenzimidazole (DMB). This Brucella canis (strain ATCC 23365 / NCTC 10854 / RM-666) protein is Nicotinate-nucleotide--dimethylbenzimidazole phosphoribosyltransferase.